The following is a 370-amino-acid chain: Myomodulin neuropeptides 1 (370 aa).

Positions 1–18 (MQVYMLLPLAVFASLTYQ) are cleaved as a signal peptide. The propeptide occupies 19 to 50 (GACEETAAAQTSSDASTSSASSEHAENELSRA). Over residues 28–40 (QTSSDASTSSASS) the composition is skewed to low complexity. The segment at 28–52 (QTSSDASTSSASSEHAENELSRAKR) is disordered. A leucine amide mark is found at Leu-60 and Leu-69. Positions 73–190 (GGPVEPESEE…EPEEGGLGEE (118 aa)) are excised as a propeptide. Leu-199 and Leu-209 each carry leucine amide. The segment covering 210 to 226 (GKREGEEGDEMDKKQDE) has biased composition (basic and acidic residues). Residues 210–230 (GKREGEEGDEMDKKQDESLND) form a disordered region. Residues 213 to 237 (EGEEGDEMDKKQDESLNDDFENDDI) constitute a propeptide that is removed on maturation. A leucine amide mark is found at Leu-246, Leu-256, Leu-266, Leu-276, Leu-286, Leu-296, Leu-306, Leu-316, Leu-326, Leu-336, and Leu-346. The segment at 344 to 370 (LRLGKRDDDEKEKKSLNMSRLGKRSTQ) is disordered. The span at 347-358 (GKRDDDEKEKKS) shows a compositional bias: basic and acidic residues. The propeptide occupies 350 to 355 (DDDEKE). Leu-364 bears the Leucine amide mark. Residues 368–370 (STQ) constitute a propeptide that is removed on maturation.

As to expression, expressed in all ganglia of the CNS, but only in a subset of neurons including L10 in the abdominal ganglion and B16 in the buccal ganglion.

The protein localises to the secreted. Functionally, exogenous application of myomodulins potentiates ARC muscle contraction. This chain is Myomodulin neuropeptides 1 (MYOMOD1), found in Aplysia californica (California sea hare).